We begin with the raw amino-acid sequence, 73 residues long: Large ribosomal subunit protein bL31 (73 aa).

This sequence belongs to the bacterial ribosomal protein bL31 family. Type A subfamily. In terms of assembly, part of the 50S ribosomal subunit.

Binds the 23S rRNA. This Cereibacter sphaeroides (strain ATCC 17025 / ATH 2.4.3) (Rhodobacter sphaeroides) protein is Large ribosomal subunit protein bL31.